We begin with the raw amino-acid sequence, 62 residues long: Prokaryotic ubiquitin-like protein Pup 2 (62 aa).

A disordered region spans residues 1–34 (MRQEKPKRHGREDDEPPEPAPAGRARDTTVGDDT). Positions 21-56 (PAGRARDTTVGDDTDELLDEIDGVLEENAVEFVRSY) are ARC ATPase binding. Glu62 is covalently cross-linked (Isoglutamyl lysine isopeptide (Glu-Lys) (interchain with K-? in acceptor proteins)).

This sequence belongs to the prokaryotic ubiquitin-like protein family. As to quaternary structure, strongly interacts with the proteasome-associated ATPase ARC through a hydrophobic interface; the interacting region of Pup lies in its C-terminal half. There is one Pup binding site per ARC hexamer ring.

The protein operates within protein degradation; proteasomal Pup-dependent pathway. Its function is as follows. Protein modifier that is covalently attached to lysine residues of substrate proteins, thereby targeting them for proteasomal degradation. The tagging system is termed pupylation. The polypeptide is Prokaryotic ubiquitin-like protein Pup 2 (Saccharopolyspora erythraea (strain ATCC 11635 / DSM 40517 / JCM 4748 / NBRC 13426 / NCIMB 8594 / NRRL 2338)).